Reading from the N-terminus, the 147-residue chain is Transcriptional repressor NrdR (147 aa).

A zinc finger spans residues 3–34 (CPYCGNVETTVVETRESDEGDAVRRRRRCSAC). The region spanning 49–139 (PAVVKKNGDR…VYREFEDIDA (91 aa)) is the ATP-cone domain.

The protein belongs to the NrdR family. The cofactor is Zn(2+).

Negatively regulates transcription of bacterial ribonucleotide reductase nrd genes and operons by binding to NrdR-boxes. This Leptothrix cholodnii (strain ATCC 51168 / LMG 8142 / SP-6) (Leptothrix discophora (strain SP-6)) protein is Transcriptional repressor NrdR.